Here is a 486-residue protein sequence, read N- to C-terminus: Hematopoietic lineage cell-specific protein (486 aa).

The involved in HAX-1 binding stretch occupies residues 27–66 (FVNDISEKEQRWGAKTIEGSGRTEHINIHQLRNKVSEEHD). Lys-41 bears the N6-acetyllysine mark. Cortactin repeat units follow at residues 79 to 115 (ASHGYGGRFGVERDRMDKSAVGHEYVADVEKHSSQTD), 116 to 152 (AARGFGGKYGVERDRADKSAVGFDYKGEVEKHASQKD), and 153 to 189 (YSHGFGGRYGVEKDKRDKAALGYDYKGETEKHESQRD). Lys-123 carries the N6-acetyllysine modification. Tyr-140 is subject to Phosphotyrosine. The Cortactin 4; truncated repeat unit spans residues 190 to 212 (YAKGFGGQYGIQKDRVDKSAVGF). Lys-192 carries the post-translational modification N6-acetyllysine. Residue Tyr-198 is modified to Phosphotyrosine. Tyr-222 carries the post-translational modification Phosphotyrosine; by FGR. The disordered stretch occupies residues 226 to 430 (TPIEAASSGA…AGPSAGAGGA (205 aa)). 2 stretches are compositionally biased toward basic and acidic residues: residues 240–258 (AKFESLAEEKRKREEEEKA) and 265–276 (QQERKAVVKMSR). An N6-acetyllysine modification is found at Lys-241. Position 275 is a phosphoserine (Ser-275). A Phosphothreonine modification is found at Thr-330. Ser-333 bears the Phosphoserine mark. The span at 358-367 (VVEEPVYEAA) shows a compositional bias: low complexity. Over residues 368–413 (PELEPEPEPDYEPEPETEPDYEDVGELDRQDEDAEGDYEDVLEPED) the composition is skewed to acidic residues. Phosphotyrosine; by SYK and FES is present on residues Tyr-388 and Tyr-405. Positions 429–486 (GAGISAIALYDYQGEGSDELSFDPDDIITDIEMVDEGWWRGQCRGHFGLFPANYVKLL) constitute an SH3 domain.

In terms of assembly, interacts (via SH2 domain) with FGR. Associates with the SH2 and SH3 domains of LCK. Binding to he LCK SH3 domain occurs constitutively, while binding to the LCK SH2 domain occurs only upon TCR stimulation. A similar binding pattern was observed with LYN, but not with FYN in which the FYN SH2 region associates upon TCR stimulation but the FYN SH3 region does not associate regardless of TCR stimulation. Directly associates with HAX1, through binding to its C-terminal region. Interacts with HS1BP3. Interacts with FES/FPS. Forms a multiprotein complex with LYN and ANKRD54. In terms of processing, phosphorylated by LYN, FYN and FGR after cross-linking of surface IgM on B-cells. Phosphorylation by LYN, FYN and FGR requires prior phosphorylation by SYK. Binds to LCK in vivo, and is tyrosine phosphorylated upon TCR stimulation. Phosphorylated by FES. As to expression, expressed only in tissues and cells of hematopoietic origin.

The protein localises to the mitochondrion. Its function is as follows. Substrate of the antigen receptor-coupled tyrosine kinase. Plays a role in antigen receptor signaling for both clonal expansion and deletion in lymphoid cells. May also be involved in the regulation of gene expression. This chain is Hematopoietic lineage cell-specific protein (Hcls1), found in Mus musculus (Mouse).